The sequence spans 527 residues: Transcription factor RBF1 (527 aa).

Disordered regions lie at residues 1–36 (MSSN…IGAS), 258–281 (ANLY…HNEE), 328–365 (HHLL…QQAA), 395–433 (QLSQ…HGLD), and 470–527 (TQGN…SGFL). Residues 160 to 300 (HVRDALTTDE…LRMINPQHNH (141 aa)) mediate DNA binding. The segment covering 263 to 281 (NEKDQKRKNKPDEPGHNEE) has biased composition (basic and acidic residues). Composition is skewed to low complexity over residues 332–365 (QQEQ…QQAA) and 395–428 (QLSQ…PQQT).

Belongs to the RBF1 family.

The protein resides in the nucleus. It is found in the chromosome. The protein localises to the telomere. Its function is as follows. Transcriptional activator that binds to the RPG box and to telomeres. Involved in the regulation of the transition between yeast and filamentous forms and plays a role in virulence. Induces expression of HWP1, a major hyphal cell protein and virulence factor. The polypeptide is Transcription factor RBF1 (RBF1) (Candida albicans (Yeast)).